The sequence spans 399 residues: Probable 2-isopropylmalate synthase (399 aa).

The Pyruvate carboxyltransferase domain occupies 20 to 272 (VRIFDTTLRD…RTGVNTKLLY (253 aa)). A divalent metal cation contacts are provided by Asp29, His210, His212, and Asn246.

This sequence belongs to the alpha-IPM synthase/homocitrate synthase family. In terms of assembly, homodimer. It depends on a divalent metal cation as a cofactor.

The enzyme catalyses 3-methyl-2-oxobutanoate + acetyl-CoA + H2O = (2S)-2-isopropylmalate + CoA + H(+). Its pathway is amino-acid biosynthesis; L-leucine biosynthesis; L-leucine from 3-methyl-2-oxobutanoate: step 1/4. Its function is as follows. Catalyzes the condensation of the acetyl group of acetyl-CoA with 3-methyl-2-oxobutanoate (2-oxoisovalerate) to form 3-carboxy-3-hydroxy-4-methylpentanoate (2-isopropylmalate). The sequence is that of Probable 2-isopropylmalate synthase (leuA) from Ignicoccus hospitalis (strain KIN4/I / DSM 18386 / JCM 14125).